The primary structure comprises 128 residues: Type III secretion protein HrcQb (128 aa).

Over residues 1–21 (MSTEDLYQEDVEMLDDYEDPS) the composition is skewed to acidic residues. The disordered stretch occupies residues 1–57 (MSTEDLYQEDVEMLDDYEDPSTEQHWSEEDGEPSGYATAEPDDHAAQEEQDEPPALD). Positions 50-128 (QDEPPALDSL…LQITRLVTRS (79 aa)) are hrcQb-C. The segment at 78–81 (RRLD) is dimer-dimer interface.

Belongs to the FliN/MopA/SpaO family. Homotetramer. The four monomers assemble into two tightly bound homodimers. Interacts with HrcQa.

Its subcellular location is the cytoplasm. Its function is as follows. Component of the type III secretion system, which is required for effector protein delivery, parasitism, and pathogenicity. Probably participates in the formation of a C-ring-like assembly along with HrcQa. This chain is Type III secretion protein HrcQb (hrcQb), found in Pseudomonas savastanoi pv. phaseolicola (Pseudomonas syringae pv. phaseolicola).